We begin with the raw amino-acid sequence, 74 residues long: MVAAAKILGAGLATIGLAGAGVGVGLVFAALINSTSRNPSLRPQLFSYTILGFALTEAIGLFALMMAFLLLYAA.

2 helical membrane-spanning segments follow: residues 12-32 (LATI…AALI) and 50-70 (ILGF…AFLL).

It belongs to the ATPase C chain family. As to quaternary structure, F-type ATPases have 2 components, CF(1) - the catalytic core - and CF(0) - the membrane proton channel. CF(1) has five subunits: alpha(3), beta(3), gamma(1), delta(1), epsilon(1). CF(0) has three main subunits: a, b and c.

It is found in the mitochondrion membrane. In terms of biological role, mitochondrial membrane ATP synthase (F(1)F(0) ATP synthase or Complex V) produces ATP from ADP in the presence of a proton gradient across the membrane which is generated by electron transport complexes of the respiratory chain. F-type ATPases consist of two structural domains, F(1) - containing the extramembraneous catalytic core and F(0) - containing the membrane proton channel, linked together by a central stalk and a peripheral stalk. During catalysis, ATP synthesis in the catalytic domain of F(1) is coupled via a rotary mechanism of the central stalk subunits to proton translocation. Part of the complex F(0) domain. A homomeric c-ring of probably 10 subunits is part of the complex rotary element. This is ATP synthase subunit 9, mitochondrial from Rhizopus oryzae (Mucormycosis agent).